A 437-amino-acid chain; its full sequence is MKPLIALVGRPNVGKSTLFNRILRQRSAIVDPTPGVTRDRHIAEGEWQGKQFLLMDTGGYNADGDTISMAMLEQTLMAIRDADIVIFLTDVRAGLSYEDLELGRLLQRTFQHKQLFFVVNKVETPQLSLDAESFIKTGFTAPYFISARDGSGVADMLDDILESLPETEKQLQEKESAIQLAVVGRPNVGKSSFVNSLLGSNRLIVSNIPGTTRDAIDSRFIRKQQEFILIDTAGLRKRTKIDAGIEYYSSLRTEKAIERCDVALVMLDAAPGIEKQDMKIINMAVERKKGALLLINKWDLIEKDSKTSKIYEETLRSNMGNLSYVPVLFISALTKKNLYRAIDTAQQISQNRSRKISTSVLNKFLEEALSHTHPSTKSGKELKIKYMTQINAAWPVFAFFCNDPLLVQANFRKFLENKLREHFSLEGVPISMRFMQK.

2 EngA-type G domains span residues 3–168 and 178–353; these read PLIA…PETE and IQLA…QNRS. GTP contacts are provided by residues 9–16, 56–60, 120–123, 184–191, 231–235, and 296–299; these read GRPNVGKS, DTGGY, NKVE, DTAGL, and NKWD. Residues 354-437 enclose the KH-like domain; that stretch reads RKISTSVLNK…VPISMRFMQK (84 aa).

The protein belongs to the TRAFAC class TrmE-Era-EngA-EngB-Septin-like GTPase superfamily. EngA (Der) GTPase family. Associates with the 50S ribosomal subunit.

In terms of biological role, GTPase that plays an essential role in the late steps of ribosome biogenesis. The sequence is that of GTPase Der from Pelodictyon phaeoclathratiforme (strain DSM 5477 / BU-1).